Here is a 101-residue protein sequence, read N- to C-terminus: Small ribosomal subunit protein uS10 (101 aa).

The protein belongs to the universal ribosomal protein uS10 family. Part of the 30S ribosomal subunit.

In terms of biological role, involved in the binding of tRNA to the ribosomes. This Parabacteroides distasonis (strain ATCC 8503 / DSM 20701 / CIP 104284 / JCM 5825 / NCTC 11152) protein is Small ribosomal subunit protein uS10.